We begin with the raw amino-acid sequence, 582 residues long: MLFGELAQYFERIEKTTKRNEMMEILADLFRKVDKEEIDKIIYLLNGRVAPDYEKIEFGMSDKLVLRAMALALKIPLLELERSYKEVGDLGELVVKYSKNEGKDLTVVETFNTLYDIANLSGEGSVDAKVNRLAFLINSLTPQGGKYLVRIVLGKLRLGVGEPTIMDALSFAKVKDKGLRPFIERAFNITSDLGYVAKVFWEGGVEALKRIKVQVGRPIRMALAERVSRAEEIIKRLGKCAVEPKFDGFRCQIHKKENSVRIFSRNLEDNTYMFPDLVEAVLKQFPDRDVIIEGEAISYNPETGEFYPFQVTVQRKRKYNISEMVELYPLQLFAFDILYLDGEDTTSLPYIRRRQKLEEALVEGEKISITKNIITNDPKEIQSFFEECITEGLEGIVAKRLDAPYQAGMRNFNWIKLKRSYQGHLADTVDCVILGYFKGRGHRAKFGIGALLVGVYDDERDLFKTIAKIGTGPTEEEWVKFREILDEIKVEKRPNNVESFIEPDVWVEPKYVVVVQADEITRSPVHTCGRELDGLGYALRFPRVQGFVREDKGPYDATTVKEILEMFRNQKKEKVEEDSDLL.

Glutamate 243 provides a ligand contact to ATP. Catalysis depends on lysine 245, which acts as the N6-AMP-lysine intermediate. Residues arginine 250, arginine 265, glutamate 295, phenylalanine 335, arginine 410, and lysine 416 each coordinate ATP.

Belongs to the ATP-dependent DNA ligase family. Requires Mg(2+) as cofactor.

The enzyme catalyses ATP + (deoxyribonucleotide)n-3'-hydroxyl + 5'-phospho-(deoxyribonucleotide)m = (deoxyribonucleotide)n+m + AMP + diphosphate.. In terms of biological role, DNA ligase that seals nicks in double-stranded DNA during DNA replication, DNA recombination and DNA repair. The sequence is that of Probable DNA ligase from Dictyoglomus thermophilum (strain ATCC 35947 / DSM 3960 / H-6-12).